Here is a 616-residue protein sequence, read N- to C-terminus: MKLVLLLAGFAALAKCSLAAPAGVQKDIPMETSAPEKPSEATTLGLLKTPKPEPKDEEPSPGAFQGDMMLTDDQLRKVEEAIDDQKAGRKKRKATIYESQRWSYKIIPYVIESSSSGQSSLIRSAMDHWEQNTCLRFEPLTSSHSSRLGHTSYISFFRGNGCWSHVGRSFTNQQQISIGPQCGYFGTIVHEIGHAIGFHHEQSRPDRDEYINVHFENVQSGREHNFAKYTWGSVTSSNVEYDVGSIMHYGGYGFSSNGRPTITTIDPRLNSRLGQRTALSAADIELANRIYECDDVEDCSNADECLNGGYHDADCDCVCPSSYSGDLCQDGGPTVRPADCSYRFTEMTGEITSPNYPSNYEDNTACVYEIEGPYGSTIELTFLDMEIETETLCRYDAVEVRKDDINSIGEKFCGNTLPPVQISSSNQMMVSFTSDPSITRRGFKATYVIIIQTTTVFSTTTLQTTPPSTTTLQTTNPSTTTLQTTNPSTTTLQTTDTPVIGSCGGTFVGVEGRVASPNYPNDYDNSLQCDYVIEVDDGRRVELIFEDFGLEDETTCRWDSLMINLGNGIKVGMKMCGREYPAASLVSIGNRMELKLKTDGSVNDRGFVASYRAIDL.

The signal sequence occupies residues 1–16; that stretch reads MKLVLLLAGFAALAKC. Positions 17 to 93 are cleaved as a propeptide — activation peptide; it reads SLAAPAGVQK…DQKAGRKKRK (77 aa). Residues 30 to 67 are disordered; the sequence is METSAPEKPSEATTLGLLKTPKPEPKDEEPSPGAFQGD. A Peptidase M12A domain is found at 93-294; the sequence is KATIYESQRW…ELANRIYECD (202 aa). Cystine bridges form between cysteine 134–cysteine 293, cysteine 162–cysteine 182, cysteine 299–cysteine 317, cysteine 319–cysteine 328, cysteine 340–cysteine 366, and cysteine 393–cysteine 413. Histidine 190 lines the Zn(2+) pocket. Glutamate 191 is a catalytic residue. 2 residues coordinate Zn(2+): histidine 194 and histidine 200. An EGF-like domain is found at 289–329; the sequence is RIYECDDVEDCSNADECLNGGYHDADCDCVCPSSYSGDLCQ. The 111-residue stretch at 340 to 450 folds into the CUB 1 domain; sequence CSYRFTEMTG…RGFKATYVII (111 aa). The segment at 461 to 491 is disordered; sequence TLQTTPPSTTTLQTTNPSTTTLQTTNPSTTT. 2 disulfides stabilise this stretch: cysteine 503–cysteine 529 and cysteine 556–cysteine 576. Residues 503–614 form the CUB 2 domain; it reads CGGTFVGVEG…RGFVASYRAI (112 aa).

Zn(2+) serves as cofactor. As to expression, asymmetrically along the animal-vegetal axis of the blastula.

This Strongylocentrotus purpuratus (Purple sea urchin) protein is Protein SpAN (SPAN).